We begin with the raw amino-acid sequence, 259 residues long: Large ribosomal subunit protein eL8 (259 aa).

Residues 1–24 form a disordered region; it reads MAPKSKKVAPSPFAQPKAAKTTKN. Phosphoserine is present on residues S11 and S33.

Belongs to the eukaryotic ribosomal protein eL8 family. Component of the large ribosomal subunit (LSU). Mature yeast ribosomes consist of a small (40S) and a large (60S) subunit. The 40S small subunit contains 1 molecule of ribosomal RNA (18S rRNA) and at least 33 different proteins. The large 60S subunit contains 3 rRNA molecules (25S, 5.8S and 5S rRNA) and at least 46 different proteins.

The protein resides in the cytoplasm. Its function is as follows. Component of the ribosome, a large ribonucleoprotein complex responsible for the synthesis of proteins in the cell. The small ribosomal subunit (SSU) binds messenger RNAs (mRNAs) and translates the encoded message by selecting cognate aminoacyl-transfer RNA (tRNA) molecules. The large subunit (LSU) contains the ribosomal catalytic site termed the peptidyl transferase center (PTC), which catalyzes the formation of peptide bonds, thereby polymerizing the amino acids delivered by tRNAs into a polypeptide chain. The nascent polypeptides leave the ribosome through a tunnel in the LSU and interact with protein factors that function in enzymatic processing, targeting, and the membrane insertion of nascent chains at the exit of the ribosomal tunnel. This Schizosaccharomyces pombe (strain 972 / ATCC 24843) (Fission yeast) protein is Large ribosomal subunit protein eL8 (rpl8).